A 165-amino-acid chain; its full sequence is Ribosomal RNA large subunit methyltransferase H (165 aa).

Residue Gly109 participates in S-adenosyl-L-methionine binding.

This sequence belongs to the RNA methyltransferase RlmH family. As to quaternary structure, homodimer.

Its subcellular location is the cytoplasm. The enzyme catalyses pseudouridine(1915) in 23S rRNA + S-adenosyl-L-methionine = N(3)-methylpseudouridine(1915) in 23S rRNA + S-adenosyl-L-homocysteine + H(+). Functionally, specifically methylates the pseudouridine at position 1915 (m3Psi1915) in 23S rRNA. This Methylorubrum populi (strain ATCC BAA-705 / NCIMB 13946 / BJ001) (Methylobacterium populi) protein is Ribosomal RNA large subunit methyltransferase H.